We begin with the raw amino-acid sequence, 481 residues long: Tryptophan--tRNA ligase, cytoplasmic (481 aa).

The WHEP-TRS domain occupies 12-68; sequence SPLELFNSIATQGELVRSLKAGNAPKDEIDSAVKMLLSLKMSYKAAMGEEYKAGCPP. Lys-158 is subject to N6-succinyllysine. Residues 168 to 177 carry the 'HIGH' region motif; the sequence is PSSEAMHLGH. The 'KMSKS' region signature appears at 353-357; the sequence is KMSAS. Phosphoserine is present on Ser-355.

The protein belongs to the class-I aminoacyl-tRNA synthetase family. As to quaternary structure, homodimer. Interacts with oxidized form of GAPDH. In terms of processing, proteolytic cleavage generates 2 forms; T1-TrpRS and T2-TrpRS. Isoform 2 is widely expressed, isoform 1 is found only in embryonic stem cells.

It is found in the cytoplasm. It carries out the reaction tRNA(Trp) + L-tryptophan + ATP = L-tryptophyl-tRNA(Trp) + AMP + diphosphate + H(+). Its function is as follows. Catalyzes the attachment of tryptophan to tRNA(Trp) in a two-step reaction: tryptophan is first activated by ATP to form Trp-AMP and then transferred to the acceptor end of the tRNA(Trp). Could also possess an angiostatic activity. The sequence is that of Tryptophan--tRNA ligase, cytoplasmic from Mus musculus (Mouse).